The primary structure comprises 167 residues: G/U mismatch-specific DNA glycosylase (167 aa).

The protein belongs to the uracil-DNA glycosylase (UDG) superfamily. TDG/mug family. As to quaternary structure, binds DNA as a monomer.

It is found in the cytoplasm. The catalysed reaction is Specifically hydrolyzes mismatched double-stranded DNA and polynucleotides, releasing free uracil.. Its function is as follows. Excises ethenocytosine and uracil, which can arise by alkylation or deamination of cytosine, respectively, from the corresponding mispairs with guanine in ds-DNA. It is capable of hydrolyzing the carbon-nitrogen bond between the sugar-phosphate backbone of the DNA and the mispaired base. The complementary strand guanine functions in substrate recognition. Required for DNA damage lesion repair in stationary-phase cells. The chain is G/U mismatch-specific DNA glycosylase from Pectobacterium atrosepticum (strain SCRI 1043 / ATCC BAA-672) (Erwinia carotovora subsp. atroseptica).